The sequence spans 159 residues: Calcium-binding protein CML39 (159 aa).

4 EF-hand domains span residues 18-53, 54-89, 93-128, and 129-159; these read EKNRDLEAVFAYMDANRDGRISAEELKKSFKTLGEQ, MSDEEAEAAVKLSDIDGDGMLDINEFALLIKGNDEF, EKKRKIMEAFRMYIADGEDCITPGSLKMMLMKLGES, and RTTDDCKVMIQAFDLNADGVLSFDEFALMMR. Residues aspartate 31, asparagine 33, aspartate 35, arginine 37, glutamate 42, aspartate 67, aspartate 69, aspartate 71, methionine 73, and glutamate 78 each contribute to the Ca(2+) site. Ca(2+) is bound by residues aspartate 142, asparagine 144, aspartate 146, and glutamate 153.

Expressed in the zones of elongation and differentiation in seedling roots and at the root-hypocotyl junction. Expressed from stage 12 of flower development in anthers, specifically in pollen.

Potential calcium sensor that binds calcium in vitro. The protein is Calcium-binding protein CML39 (CML39) of Arabidopsis thaliana (Mouse-ear cress).